A 324-amino-acid polypeptide reads, in one-letter code: MSKNERRTFLLDFEKPLWELEARINQIRELAEENNVDVSEQIAQLERRAEELRQEIFSTLTPSQRLQLARHPRRPSTLDYIQAIADEWFELHGDRGGYDDPALVGGVARLGGRPVTILGEQKGRDTKDNVARNFGMASPGGYRKAMRLMERANQFNQPIITFIDTPGAWAGVEAEKLGQGEAIAYNLREMFRLDVPIICTVIGEGGSGGALGIGVGDRLLMLEHAVYMVATPEACAAILWKDAKKSPQAAMALKITSSDLKELGIIDEIVPEPSGAAHSKPLEAANLLKQTLIDTIDELSSLSPEQRRKLRYQKYRQIGVFFES.

One can recognise a CoA carboxyltransferase C-terminal domain in the interval 44–298 (QLERRAEELR…KQTLIDTIDE (255 aa)).

This sequence belongs to the AccA family. As to quaternary structure, acetyl-CoA carboxylase is a heterohexamer composed of biotin carboxyl carrier protein (AccB), biotin carboxylase (AccC) and two subunits each of ACCase subunit alpha (AccA) and ACCase subunit beta (AccD).

The protein localises to the cytoplasm. It carries out the reaction N(6)-carboxybiotinyl-L-lysyl-[protein] + acetyl-CoA = N(6)-biotinyl-L-lysyl-[protein] + malonyl-CoA. It participates in lipid metabolism; malonyl-CoA biosynthesis; malonyl-CoA from acetyl-CoA: step 1/1. In terms of biological role, component of the acetyl coenzyme A carboxylase (ACC) complex. First, biotin carboxylase catalyzes the carboxylation of biotin on its carrier protein (BCCP) and then the CO(2) group is transferred by the carboxyltransferase to acetyl-CoA to form malonyl-CoA. The protein is Acetyl-coenzyme A carboxylase carboxyl transferase subunit alpha of Rippkaea orientalis (strain PCC 8801 / RF-1) (Cyanothece sp. (strain PCC 8801)).